A 617-amino-acid chain; its full sequence is Ceramide transfer protein (617 aa).

Positions 1–11 are enriched in polar residues; the sequence is MSDNQSWNSSG. Residues 1–23 form a disordered region; sequence MSDNQSWNSSGSEEDLETESGPP. The 95-residue stretch at 23-117 folds into the PH domain; sequence PVERCGVLSK…WIDSIEQHKS (95 aa). Residues 268-302 are a coiled coil; it reads REDSWQKRLDKEIEKRRRVEEAYKNAMTELKKKSH. An FFAT motif is present at residues 320–326; it reads EFFDAVE. Over residues 332–344 the composition is skewed to basic and acidic residues; it reads QDKIEQSQSEKGR. The segment at 332-355 is disordered; it reads QDKIEQSQSEKGRSHWPSSLPSTE. The START domain maps to 383–611; it reads DEHRFRIQVE…FTSYVQEKTA (229 aa). Positions 466, 487, 524, and 572 each coordinate an N-acylsphing-4-enine.

The protein localises to the cytoplasm. The protein resides in the golgi apparatus. It is found in the endoplasmic reticulum. It carries out the reaction N-hexadecanoylsphing-4-enine(in) = N-hexadecanoylsphing-4-enine(out). In terms of biological role, may mediate the intracellular trafficking of ceramide in a non-vesicular manner. The sequence is that of Ceramide transfer protein (cert1) from Xenopus tropicalis (Western clawed frog).